Reading from the N-terminus, the 157-residue chain is Class I hydrophobin rodA (157 aa).

The first 41 residues, 1-41 (MKFSIAAAVVAFAASVAALPPAHDSQFAGNGVGNKGNSNVK), serve as a signal peptide directing secretion. N-linked (GlcNAc...) asparagine glycosylation occurs at Asn47. 4 cysteine pairs are disulfide-bonded: Cys57/Cys131, Cys65/Cys125, Cys66/Cys106, and Cys132/Cys150.

The protein belongs to the fungal hydrophobin family. As to quaternary structure, self-assembles to form functional amyloid fibrils called rodlets. Self-assembly into fibrillar rodlets occurs spontaneously at hydrophobic:hydrophilic interfaces and the rodlets further associate laterally to form amphipathic monolayers.

The protein localises to the secreted. It is found in the spore wall. Functionally, aerial growth, conidiation, and dispersal of filamentous fungi in the environment rely upon a capability of their secreting small amphipathic proteins called hydrophobins (HPBs) with low sequence identity. Class I can self-assemble into an outermost layer of rodlet bundles on aerial cell surfaces, conferring cellular hydrophobicity that supports fungal growth, development and dispersal; whereas Class II form highly ordered films at water-air interfaces through intermolecular interactions but contribute nothing to the rodlet structure. RodA is a class I hydrophobin that contributes to surface hydrophobicity, which is important for processes such as association of hyphae in reproductive structures, dispersal of aerial spores and adhesion of pathogens to host structures. Important for the formation of hydrophobic rodlet layers of asexually-produced spores. Promotes also biofilm formation and may enhance lignocellulose utilization via promoting a compact substrate-enzyme-fungus structure. The protein is Class I hydrophobin rodA of Emericella nidulans (strain FGSC A4 / ATCC 38163 / CBS 112.46 / NRRL 194 / M139) (Aspergillus nidulans).